The primary structure comprises 300 residues: tRNA dimethylallyltransferase (300 aa).

Residue 9–16 (GPTASGKS) participates in ATP binding. 11 to 16 (TASGKS) contributes to the substrate binding site. The segment at 34-37 (DSKQ) is interaction with substrate tRNA.

The protein belongs to the IPP transferase family. In terms of assembly, monomer. It depends on Mg(2+) as a cofactor.

The catalysed reaction is adenosine(37) in tRNA + dimethylallyl diphosphate = N(6)-dimethylallyladenosine(37) in tRNA + diphosphate. Its function is as follows. Catalyzes the transfer of a dimethylallyl group onto the adenine at position 37 in tRNAs that read codons beginning with uridine, leading to the formation of N6-(dimethylallyl)adenosine (i(6)A). The polypeptide is tRNA dimethylallyltransferase (Ehrlichia canis (strain Jake)).